The chain runs to 129 residues: MTDTDTTTTIYTHEEVAQHTTHDDLWVILNGKVYNISNYIDEHPGGEEVILDCAGTDATEAFDDIGHSDEAHEILEKLYIGNLKGAKIVEAKHAQSFSTEEDSGINFPLIAVGVFLAAFGVYYYKTNFA.

Residues 8-84 (TTIYTHEEVA…LEKLYIGNLK (77 aa)) enclose the Cytochrome b5 heme-binding domain. Heme contacts are provided by His43 and His67. The helical transmembrane segment at 104–124 (GINFPLIAVGVFLAAFGVYYY) threads the bilayer.

This sequence belongs to the cytochrome b5 family.

It is found in the endoplasmic reticulum membrane. It localises to the microsome membrane. Its function is as follows. Membrane bound hemoprotein which function as an electron carrier for several membrane bound oxygenases. The polypeptide is Cytochrome b5 (Cytb5) (Candida tropicalis (Yeast)).